Consider the following 282-residue polypeptide: Halorhodopsin (282 aa).

Residues 1–29 (MMETAADALASGTVPLEMTQTQIFEAIQG) lie on the Extracellular side of the membrane. A helical transmembrane segment spans residues 30 to 55 (DTLLASSLWINIALAGLSILLFVYMG). At 56-61 (RNLEDP) the chain is on the cytoplasmic side. Residues 62-85 (RAQLIFVATLMVPLVSISSYTGLV) form a helical membrane-spanning segment. The Extracellular segment spans residues 86–109 (SGLTVSFLEMPAGHALAGQEVLTP). A helical transmembrane segment spans residues 110–131 (WGRYLTWALSTPMILVALGLLA). The Cytoplasmic segment spans residues 132 to 134 (GSN). The helical transmembrane segment at 135–158 (ATKLFTAVTADIGMCVTGLAAALT) threads the bilayer. Residues 159–161 (TSS) lie on the Extracellular side of the membrane. The chain crosses the membrane as a helical span at residues 162–184 (YLLRWVWYVISCAFFVVVLYVLL). Over 185-196 (AEWAEDAEVAGT) the chain is Cytoplasmic. Residues 197-220 (AEIFNTLKLLTVVLWLGYPIFWAL) form a helical membrane-spanning segment. Over 221–229 (GAEGLAVLD) the chain is Extracellular. The chain crosses the membrane as a helical span at residues 230 to 258 (VAVTSWAYSGMDIVAKYLFAFLLLRWVVD). N6-(retinylidene)lysine is present on K245. Residues 259–282 (NERTVAGMAAGLGAPLARCAPADD) are Cytoplasmic-facing.

It belongs to the archaeal/bacterial/fungal opsin family.

It is found in the cell membrane. Functionally, light-driven chloride pump. The chain is Halorhodopsin (hop) from Halorubrum sodomense.